Consider the following 494-residue polypeptide: MFHVQKELGSHEAVIVALFEEEKTSSFVKELDKAFEGQLQVLLEEKELSTKKKAISKVHSLGKTNVKRYYFVGLGKKESYTTEILRAALGKAFKTLQAAKVQDAAILLDSFVTEKLDAIDVAHIAAEVQGLGTYELQTYKSDKKDRVELEKFTAITAEDTQEIEAALTVGYVHGRATNSARTLVNMPPNVLTATKLAEYAVELAEKYDMDYKVLEKEEMEELGMGALLAVNQGSVEPPKMIALIYKGKEEWTDVIGFVGKGITYDTGGYSLKPREGMVGMKGDMGGAAAVLGAMEIIGELRPEQNVIAVIPSTDNVVSGTAFKPDDVITSMSGKTIEVLNTDAEGRLALADGITYAKKLGANYLIDVATLTGGVIVALGNHTTGAMTNNEELFEQVLEASMETDESIWQLPIFDRDKERVRNSKFADLNNSPGREGHAVMAGTFLGEFAEDTPWVHLDIAGTSESSGAHDLGPAGATGAMVRTLATLVERFGEE.

Lys260 and Asp265 together coordinate Mn(2+). Residue Lys272 is part of the active site. 3 residues coordinate Mn(2+): Asp283, Asp342, and Glu344. Arg346 is a catalytic residue.

This sequence belongs to the peptidase M17 family. The cofactor is Mn(2+).

It localises to the cytoplasm. It catalyses the reaction Release of an N-terminal amino acid, Xaa-|-Yaa-, in which Xaa is preferably Leu, but may be other amino acids including Pro although not Arg or Lys, and Yaa may be Pro. Amino acid amides and methyl esters are also readily hydrolyzed, but rates on arylamides are exceedingly low.. The enzyme catalyses Release of an N-terminal amino acid, preferentially leucine, but not glutamic or aspartic acids.. Its function is as follows. Presumably involved in the processing and regular turnover of intracellular proteins. Catalyzes the removal of unsubstituted N-terminal amino acids from various peptides. This is Probable cytosol aminopeptidase from Bacillus cereus (strain ATCC 10987 / NRS 248).